We begin with the raw amino-acid sequence, 216 residues long: UPF0193 protein EVG1 homolog (216 aa).

Belongs to the UPF0193 (EVG1) family.

This Mus musculus (Mouse) protein is UPF0193 protein EVG1 homolog.